The following is a 398-amino-acid chain: UDP-D-apiose/UDP-D-xylose synthase (398 aa).

57–88 (DVYCDKIRHLVDPAPPHLHGRISFHRLNIKND) is a binding site for NAD(+). Substrate is bound at residue R190. The Proton acceptor role is filled by Y193. 193 to 197 (YACAK) is a binding site for NAD(+). Residue N222 participates in substrate binding. Position 243 (R243) interacts with NAD(+). Substrate-binding positions include 244–248 (VLACF), 261–268 (VDGGQSQR), and 345–349 (DSDKR).

It belongs to the NAD(P)-dependent epimerase/dehydratase family. As to quaternary structure, homodimer. Requires NAD(+) as cofactor.

Its subcellular location is the cytoplasm. Functionally, catalyzes the conversion of UDP-D-glucuronate to a mixture of UDP-D-apiose and UDP-D-xylose. D-Apiose (3-C-hydroxymethyl-d-erythrose) is the only plant cell wall monosaccharide with a branched carbon skeleton and found in rhamnogalacturonan II (RG-II), apiogalacturonan, and several apioglycosides. The protein is UDP-D-apiose/UDP-D-xylose synthase of Oryza sativa subsp. japonica (Rice).